Reading from the N-terminus, the 115-residue chain is Large ribosomal subunit protein bL20 (115 aa).

This sequence belongs to the bacterial ribosomal protein bL20 family.

In terms of biological role, binds directly to 23S ribosomal RNA and is necessary for the in vitro assembly process of the 50S ribosomal subunit. It is not involved in the protein synthesizing functions of that subunit. This is Large ribosomal subunit protein bL20 from Synechococcus sp. (strain CC9311).